The sequence spans 215 residues: Rod-determining factor A (215 aa).

Involved in cell-shape determination. Required for the formation of rods and wild-type-like motility. This chain is Rod-determining factor A, found in Haloferax volcanii (strain ATCC 29605 / DSM 3757 / JCM 8879 / NBRC 14742 / NCIMB 2012 / VKM B-1768 / DS2) (Halobacterium volcanii).